A 1255-amino-acid polypeptide reads, in one-letter code: Pre-mRNA-splicing factor ATP-dependent RNA helicase DEAH7 (1255 aa).

Residues 1 to 316 (MGVDPFKTTE…SDEDRSQGAE (316 aa)) form a disordered region. The span at 13-60 (EADKETNGGVPVKDKLTFKAPERKSRLGLDARAIEKKDNAKTEGEFKV) shows a compositional bias: basic and acidic residues. A compositionally biased stretch (polar residues) spans 109-137 (AQESTVTTENAGTSDISITPRTLSCTSSY). Short sequence motifs (nuclear localization signal) lie at residues 144–153 (RHREEHRRDR) and 172–191 (RRRESYRQSDRDYHGEKRRR). Residues 144–219 (RHREEHRRDR…EWERSPHGDR (76 aa)) are compositionally biased toward basic and acidic residues. Composition is skewed to low complexity over residues 220–240 (GSSYSRRPQPSPSPMLAAASP) and 271–290 (PIRASGSSIRSSSSRYGGRS). A compositionally biased stretch (basic and acidic residues) spans 297–316 (REGDLTNEGHSDEDRSQGAE). The 164-residue stretch at 568 to 731 (LQVIRENQVI…FGSVPIFNIP (164 aa)) folds into the Helicase ATP-binding domain. 581 to 588 (GETGSGKT) lines the ATP pocket. The DEAH box motif lies at 678-681 (DEAH). Positions 753–933 (AVKQAMTIHI…NVVLLLKSLK (181 aa)) constitute a Helicase C-terminal domain. Positions 1190–1224 (LEHKKKQKEEKSGMEEEMEKLRRDQVESELRSKER) are enriched in basic and acidic residues. Positions 1190 to 1255 (LEHKKKQKEE…TFLRPKKLGL (66 aa)) are disordered.

The protein belongs to the DEAD box helicase family. DEAH subfamily. PRP16 sub-subfamily. As to quaternary structure, interacts with the Phytophthora PSR1 protein.

The protein resides in the nucleus. It carries out the reaction ATP + H2O = ADP + phosphate + H(+). Functionally, involved in pre-mRNA splicing by mediating structural transitions of the spliceosome during the catalytic step. Facilitates expression of genes involved in auxin-mediated development including male-gametophyte transmission, apical-basal patterning of embryonic and gynoecium development, stamen development, phyllotactic flower positioning, and vascular development. Also involved in root-meristem maintenance and planar polarity of root-hair positioning. Acts as a component of RNA silencing that regulates distinct classes of endogenous small RNAs. Functions as a positive regulator of plant immunity. This chain is Pre-mRNA-splicing factor ATP-dependent RNA helicase DEAH7, found in Arabidopsis thaliana (Mouse-ear cress).